Consider the following 377-residue polypeptide: Nucleoside diphosphate kinase homolog 7 (377 aa).

Residues 3-91 (HSERFVFIAE…YTARQLGSKK (89 aa)) enclose the DM10 domain.

This sequence belongs to the NDK family. In terms of assembly, component of sperm flagellar doublet microtubules. Component of the gamma-tubulin ring complex. Expressed in trachea multiciliated cells.

It is found in the cytoplasm. The protein localises to the cytoskeleton. Its subcellular location is the microtubule organizing center. The protein resides in the centrosome. It localises to the nucleus. It is found in the spindle. The protein localises to the cilium axoneme. Its subcellular location is the flagellum axoneme. The protein resides in the cell projection. It localises to the cilium. In terms of biological role, possesses an intrinsic kinase activity. Displays 3'-5' exonuclease activity with a preference for single-stranded DNA. Does not seem to have nucleoside diphosphate kinase activity. Functional component of the gamma-tubulin ring complex, implicated in the regulation of the microtubule-nucleating activity of the gamma-tubulin ring complex in centrosomes, in a kinase activity-dependent manner. Part of the dynein-decorated doublet microtubules (DMTs) in cilia axoneme, which is required for motile cilia beating. The protein is Nucleoside diphosphate kinase homolog 7 (NME7) of Bos taurus (Bovine).